The chain runs to 281 residues: uncharacterized protein (281 aa).

The protein resides in the plastid. The protein localises to the chloroplast. This is an uncharacterized protein from Euglena gracilis.